The primary structure comprises 353 residues: MTSFVPQSLSPQFHSMGQESQEFSLYGDNFYSAQHVPSPQQTLPSAYDFGEYAGQTSNPYLWFNGPGLSPAPCLTTGPQHYGMAKQYVGASGIGGSEGAFSWFSLPSQEDLMKLVRPPYSYSALIAMAIHGAPNRRLTLSQIYQYVADNFPFYNKSKASWQNSIRHNLSLNDCFMKVPRDDSDPGKGNYWTLDPNCEKMFDNGNFRRKRKRKSDSLAEEEGKGYSGSDSALSSPKNPSDSSERGNSPISTDQAPCLNSFLNQMGDVASGSREALLPSPLAVPLSQRSSPTGVYGSYSPNATMPQWETQIPQSSISSTPYKDGYSDSMLNPYSSQLYPVLGSSDLLYPREGSEV.

Residues 116–210 constitute a DNA-binding region (fork-head); it reads RPPYSYSALI…DNGNFRRKRK (95 aa). Positions 201 to 255 are disordered; the sequence is DNGNFRRKRKRKSDSLAEEEGKGYSGSDSALSSPKNPSDSSERGNSPISTDQAPC. The short motif at 206–212 is the Nuclear localization signal element; sequence RRKRKRK. Residues 213 to 222 show a composition bias toward basic and acidic residues; the sequence is SDSLAEEEGK. Polar residues predominate over residues 226 to 252; sequence GSDSALSSPKNPSDSSERGNSPISTDQ.

Expressed in ionocyte precursors.

It localises to the nucleus. Functionally, transcription factor required for epithelial cell differentiation. Involved in specification of skin ionocytes from epidermal precursors. This Danio rerio (Zebrafish) protein is Forkhead box protein I3-A.